Reading from the N-terminus, the 1562-residue chain is NAC-alpha domain-containing protein 1 (1562 aa).

Low complexity predominate over residues 1-13 (MPGEAARAELLLP). Disordered regions lie at residues 1-24 (MPGEAARAELLLPEADRPGPRTDL), 56-110 (FLPS…TEAP), 131-226 (SPRA…ADGD), 249-288 (SGWGLSPQGSMVDERELHPAGTPEPPSSESSLSADSSSSW), 327-365 (TPLSPEEEEEEAVADPDPGGDLAGEGEEDSTSASFLQSL), 381-458 (RDDT…GAYL), 503-941 (TPQA…EPLA), and 953-1423 (GCAP…AMSK). Over residues 195–208 (GDARDSEAELRDEL) the composition is skewed to basic and acidic residues. The segment covering 275–287 (SSESSLSADSSSS) has biased composition (low complexity). Residues 331–340 (PEEEEEEAVA) are compositionally biased toward acidic residues. A compositionally biased stretch (low complexity) spans 385–397 (SAASSDSDSASYA). 2 stretches are compositionally biased toward polar residues: residues 449 to 458 (PQTSDRGAYL) and 550 to 564 (QEETSLTLCPDSPQN). A compositionally biased stretch (low complexity) spans 992-1007 (PAALDQVQQDDPQPAA). The span at 1048–1074 (PGREACLEARAHTGDGAKPDSPQKETL) shows a compositional bias: basic and acidic residues. Position 1068 is a phosphoserine (Ser-1068). 2 stretches are compositionally biased toward low complexity: residues 1172-1182 (APTSAPTSQQP) and 1231-1241 (APGTLAGAALP). Acidic residues predominate over residues 1254-1264 (PQEDSVEDEEP). 3 stretches are compositionally biased toward low complexity: residues 1265-1284 (PGSLGLPPPQAGVQPAAAAV), 1298-1308 (SLSPHSPLLSP), and 1335-1344 (QSPAGPQGLS). Over residues 1348 to 1357 (QQEDEDSLEE) the composition is skewed to acidic residues. Ser-1354 carries the post-translational modification Phosphoserine. One can recognise an NAC-A/B domain in the interval 1411-1476 (SRSEKKARKA…AKIEDLSQQV (66 aa)).

Belongs to the NAC-alpha family.

It localises to the cytoplasm. It is found in the nucleus. Its function is as follows. May prevent inappropriate targeting of non-secretory polypeptides to the endoplasmic reticulum (ER). May bind to nascent polypeptide chains as they emerge from the ribosome and block their interaction with the signal recognition particle (SRP), which normally targets nascent secretory peptides to the ER. May also reduce the inherent affinity of ribosomes for protein translocation sites in the ER membrane (M sites). The protein is NAC-alpha domain-containing protein 1 (NACAD) of Homo sapiens (Human).